Here is a 388-residue protein sequence, read N- to C-terminus: P2X purinoceptor 4 (388 aa).

Topologically, residues methionine 1–arginine 33 are cytoplasmic. The chain crosses the membrane as a helical span at residues alanine 34–tyrosine 54. Residues glutamine 55–asparagine 338 lie on the Extracellular side of the membrane. Residues lysine 67 and lysine 69 each coordinate ATP. Lysine 67 and lysine 69 together coordinate CTP. 2 N-linked (GlcNAc...) asparagine glycosylation sites follow: asparagine 75 and asparagine 110. 3 disulfides stabilise this stretch: cysteine 116-cysteine 165, cysteine 126-cysteine 149, and cysteine 132-cysteine 159. Asparagine 153 and asparagine 184 each carry an N-linked (GlcNAc...) asparagine glycan. Positions 186 and 188 each coordinate ATP. Residue threonine 186 participates in CTP binding. N-linked (GlcNAc...) asparagine glycans are attached at residues asparagine 199 and asparagine 208. 2 disulfides stabilise this stretch: cysteine 217–cysteine 227 and cysteine 261–cysteine 270. Asparagine 293, arginine 295, and lysine 313 together coordinate ATP. Positions 293, 295, and 313 each coordinate CTP. A helical transmembrane segment spans residues valine 339–tyrosine 359. Residues cysteine 360–glutamine 388 lie on the Cytoplasmic side of the membrane.

The protein belongs to the P2X receptor family. In terms of assembly, functional P2RXs are organized as homomeric and heteromeric trimers. Forms heterotrimer with P2RX1. Interacts with P2RX7 (via C-terminus); this interaction is functional only in the presence of ATP. Forms heterotrimer with P2RX4; functional differences between homomeric P2RX4 and P2RX4/6 heterotrimer are minor. Interacts with AP1M2. In terms of tissue distribution, widespread distribution in the brain. Strongly expressed in microglial cells. Also expressed in epithelial cells.

It is found in the cell membrane. The protein resides in the lysosome membrane. The enzyme catalyses K(+)(in) = K(+)(out). The catalysed reaction is Na(+)(in) = Na(+)(out). It carries out the reaction Ca(2+)(in) = Ca(2+)(out). Its activity is regulated as follows. Activated by ATP. pH-dependent and inhibited by acidic pH. In terms of biological role, ATP-gated nonselective transmembrane cation channel permeable to potassium, sodium and calcium. CTP, but not GTP or UTP, functions as a weak affinity agonist for P2RX4. Activated by extracellularly released ATP, it plays multiple role in immunity and central nervous system physiology. Plays a key role in initial steps of T-cell activation and Ca(2+) microdomain formation. Also participates in basal T-cell activity without TCR/CD3 stimulation. Promotes the differentiation and activation of Th17 cells via expression of retinoic acid-related orphan receptor C/RORC. Upon activation, drives microglia motility via the PI3K/Akt pathway. Could also function as an ATP-gated cation channel of lysosomal membranes. The protein is P2X purinoceptor 4 (P2rx4) of Rattus norvegicus (Rat).